Consider the following 320-residue polypeptide: R2-like ligand binding oxidase (320 aa).

3 residues coordinate Mn(2+): Glu68, Glu101, and His104. Residues 71–162 (VTKDIQPFMS…AAQVRASVVY (92 aa)) constitute a cross-link (3-(O4'-tyrosyl)-valine (Val-Tyr)). Glu101 contacts Fe cation. Residues Glu167, Glu202, and His205 each contribute to the Fe cation site.

The protein belongs to the ribonucleoside diphosphate reductase small chain family. R2-like ligand binding oxidase subfamily. Homodimer. It depends on Fe cation as a cofactor. Requires Mn(2+) as cofactor.

Functionally, probable oxidase that might be involved in lipid metabolism. This Mycolicibacterium smegmatis (strain ATCC 700084 / mc(2)155) (Mycobacterium smegmatis) protein is R2-like ligand binding oxidase (nrdB).